A 291-amino-acid polypeptide reads, in one-letter code: Acetyl-coenzyme A carboxylase carboxyl transferase subunit beta (291 aa).

One can recognise a CoA carboxyltransferase N-terminal domain in the interval 29 to 291 (IMTKCPDCKK…TGGDLEWLEN (263 aa)). Residues cysteine 33, cysteine 36, cysteine 52, and cysteine 55 each contribute to the Zn(2+) site. A C4-type zinc finger spans residues 33-55 (CPDCKKIMLTKELDKNLRVCMNC).

This sequence belongs to the AccD/PCCB family. In terms of assembly, acetyl-CoA carboxylase is a heterohexamer composed of biotin carboxyl carrier protein (AccB), biotin carboxylase (AccC) and two subunits each of ACCase subunit alpha (AccA) and ACCase subunit beta (AccD). Zn(2+) serves as cofactor.

Its subcellular location is the cytoplasm. The enzyme catalyses N(6)-carboxybiotinyl-L-lysyl-[protein] + acetyl-CoA = N(6)-biotinyl-L-lysyl-[protein] + malonyl-CoA. The protein operates within lipid metabolism; malonyl-CoA biosynthesis; malonyl-CoA from acetyl-CoA: step 1/1. Functionally, component of the acetyl coenzyme A carboxylase (ACC) complex. Biotin carboxylase (BC) catalyzes the carboxylation of biotin on its carrier protein (BCCP) and then the CO(2) group is transferred by the transcarboxylase to acetyl-CoA to form malonyl-CoA. The protein is Acetyl-coenzyme A carboxylase carboxyl transferase subunit beta of Bacillus licheniformis (strain ATCC 14580 / DSM 13 / JCM 2505 / CCUG 7422 / NBRC 12200 / NCIMB 9375 / NCTC 10341 / NRRL NRS-1264 / Gibson 46).